We begin with the raw amino-acid sequence, 282 residues long: Undecaprenyl-diphosphatase (282 aa).

Transmembrane regions (helical) follow at residues 1-21 (MTLIQAILLGIIQGLTEFLPI), 39-59 (PGAAFTAIIQIGTLGAVMLYF), 85-105 (AKMGWMIAAGTLPIVAFGLLF), 115-135 (SLYWISGALIILALVLSLAEW), 153-173 (IGWKEALLIGLAQAIALIPGS), 193-213 (AARFSFLLSLPAVFAAGAFEL), 229-249 (NLAVATITSGIVGYLSIAFLL), and 259-279 (IFIAYRLAAGAGLLLLLGGGT).

This sequence belongs to the UppP family.

It is found in the cell inner membrane. The catalysed reaction is di-trans,octa-cis-undecaprenyl diphosphate + H2O = di-trans,octa-cis-undecaprenyl phosphate + phosphate + H(+). Catalyzes the dephosphorylation of undecaprenyl diphosphate (UPP). Confers resistance to bacitracin. This is Undecaprenyl-diphosphatase from Chlorobium luteolum (strain DSM 273 / BCRC 81028 / 2530) (Pelodictyon luteolum).